Reading from the N-terminus, the 261-residue chain is ClpXP adapter protein SpxH (261 aa).

Belongs to the SpxH family. Interacts with Spx.

The protein localises to the cytoplasm. Its function is as follows. Adapter protein required for efficient degradation of Spx by ClpXP under non-stress conditions. Interaction with Spx stabilizes Spx and exposes the C-terminus of Spx for recognition and proteolysis by ClpXP. The sequence is that of ClpXP adapter protein SpxH from Staphylococcus aureus.